The chain runs to 317 residues: Transaldolase (317 aa).

The active-site Schiff-base intermediate with substrate is K132.

The protein belongs to the transaldolase family. Type 1 subfamily.

The protein localises to the cytoplasm. It carries out the reaction D-sedoheptulose 7-phosphate + D-glyceraldehyde 3-phosphate = D-erythrose 4-phosphate + beta-D-fructose 6-phosphate. It functions in the pathway carbohydrate degradation; pentose phosphate pathway; D-glyceraldehyde 3-phosphate and beta-D-fructose 6-phosphate from D-ribose 5-phosphate and D-xylulose 5-phosphate (non-oxidative stage): step 2/3. Its function is as follows. Transaldolase is important for the balance of metabolites in the pentose-phosphate pathway. The protein is Transaldolase of Haemophilus influenzae (strain ATCC 51907 / DSM 11121 / KW20 / Rd).